Consider the following 163-residue polypeptide: Staphylokinase (163 aa).

Positions 1-27 (MLKRSLLFLTVLLLLFSFSSITNEVSA) are cleaved as a signal peptide.

The protein belongs to the staphylokinase family.

The protein localises to the secreted. Its function is as follows. Potent plasminogen activator that converts plasminogen into plasmin. It forms a 1:1 complex with plasmin, which in turn activates other plasminogen molecules. The polypeptide is Staphylokinase (Staphylococcus phage S phi-C (Bacteriophage S phi-C)).